A 107-amino-acid chain; its full sequence is High mobility group protein HMG-I/HMG-Y (107 aa).

The segment covering 1 to 13 (MSESGSKSSQPLA) has biased composition (polar residues). Positions 1 to 107 (MSESGSKSSQ…ISQESSEEEQ (107 aa)) are disordered. At Ser-2 the chain carries N-acetylserine. Lys-7 is subject to N6-acetyllysine. Ser-8 is subject to ADP-ribosylserine. Position 9 is an ADP-ribosylserine; alternate (Ser-9). Position 9 is a phosphoserine; alternate (Ser-9). Lys-15 carries the N6-acetyllysine; alternate modification. Lys-15 participates in a covalent cross-link: Glycyl lysine isopeptide (Lys-Gly) (interchain with G-Cter in SUMO2); alternate. Residues 15–24 (KQEKDGTEKR) are compositionally biased toward basic and acidic residues. A DNA-binding region (a.T hook 1) is located at residues 21-31 (TEKRGRGRPRK). Asymmetric dimethylarginine; alternate is present on Arg-26. Arg-26 is subject to Omega-N-methylarginine; alternate. Position 26 is a symmetric dimethylarginine; alternate (Arg-26). Ser-36 is subject to Phosphoserine; by HIPK2 and CDC2. Residue Thr-39 is modified to Phosphothreonine. Phosphoserine occurs at positions 44 and 49. Thr-53 carries the post-translational modification Phosphothreonine; by HIPK2 and CDC2. 2 consecutive DNA-binding regions (a.T hook) follow at residues 53–63 (TPKRPRGRPKG) and 78–89 (APGRKPRGRPKK). The interaction with HIPK2 stretch occupies residues 53–77 (TPKRPRGRPKGSKNKGAAKTRKVTT). Residues 55–74 (KRPRGRPKGSKNKGAAKTRK) are compositionally biased toward basic residues. Arg-58 and Arg-60 each carry asymmetric dimethylarginine; by PRMT6; alternate. Residues Arg-58 and Arg-60 each carry the omega-N-methylarginine; by PRMT6; alternate modification. Residues 93-107 (EEEEGISQESSEEEQ) show a composition bias toward acidic residues. 3 positions are modified to phosphoserine: Ser-99, Ser-102, and Ser-103.

This sequence belongs to the HMGA family. As to quaternary structure, interacts with HIPK2. Isoforms HMG-I and HMG-Y can be phosphorylated by HIPK2. Phosphorylation may modulate DNA-binding affinity. In terms of processing, methylation at Arg-58 is mutually exclusive with methylation at Arg-60.

It localises to the nucleus. It is found in the chromosome. In terms of biological role, HMG-I/Y bind preferentially to the minor groove of A+T rich regions in double-stranded DNA. It is suggested that these proteins could function in nucleosome phasing and in the 3'-end processing of mRNA transcripts. They are also involved in the transcription regulation of genes containing, or in close proximity to A+T-rich regions. This is High mobility group protein HMG-I/HMG-Y (Hmga1) from Mus musculus (Mouse).